Consider the following 295-residue polypeptide: Indole-3-glycerol phosphate synthase (295 aa).

The protein belongs to the TrpC family.

The enzyme catalyses 1-(2-carboxyphenylamino)-1-deoxy-D-ribulose 5-phosphate + H(+) = (1S,2R)-1-C-(indol-3-yl)glycerol 3-phosphate + CO2 + H2O. Its pathway is amino-acid biosynthesis; L-tryptophan biosynthesis; L-tryptophan from chorismate: step 4/5. This Prochlorococcus marinus (strain MIT 9215) protein is Indole-3-glycerol phosphate synthase.